The primary structure comprises 71 residues: MTFSRRRTSPIKPTDSIDYKNIDLLSQFITEQGKILPRRVNNISAKQQRAITKAIKQARFLTLLPFLNQEI.

Belongs to the bacterial ribosomal protein bS18 family. In terms of assembly, part of the 30S ribosomal subunit.

The protein localises to the plastid. It is found in the chloroplast. This chain is Small ribosomal subunit protein bS18c (rps18), found in Mesostigma viride (Green alga).